Reading from the N-terminus, the 210-residue chain is Large ribosomal subunit protein uL3 (210 aa).

The tract at residues 119 to 151 (FQGAIKRHGQSRGPMSHGSRYHRRPGSMGPVAP) is disordered.

This sequence belongs to the universal ribosomal protein uL3 family. In terms of assembly, part of the 50S ribosomal subunit. Forms a cluster with proteins L14 and L19.

Functionally, one of the primary rRNA binding proteins, it binds directly near the 3'-end of the 23S rRNA, where it nucleates assembly of the 50S subunit. This is Large ribosomal subunit protein uL3 from Bacillus cytotoxicus (strain DSM 22905 / CIP 110041 / 391-98 / NVH 391-98).